We begin with the raw amino-acid sequence, 134 residues long: Small ribosomal subunit protein bS16 (134 aa).

Residues 79 to 134 (AGIAKRPSRNNPTKGEPGKKAQERLALAKQAEEEAAAKAAEAAAAAAAPAEEAASE) form a disordered region. The span at 115-134 (AKAAEAAAAAAAPAEEAASE) shows a compositional bias: low complexity.

This sequence belongs to the bacterial ribosomal protein bS16 family.

The sequence is that of Small ribosomal subunit protein bS16 from Brucella canis (strain ATCC 23365 / NCTC 10854 / RM-666).